The sequence spans 436 residues: Capsid protein (436 aa).

The segment at Arg326–Ser370 is disordered. The segment covering Gln330–Glu344 has biased composition (polar residues).

This sequence belongs to the anelloviridae capsid protein family.

It localises to the virion. In terms of biological role, self-assembles to form an icosahedral capsid with a T=1 symmetry, about 30 nm in diameter, and consisting of 60 capsid proteins. The capsid encapsulates the genomic DNA. Capsid protein is involved in attachment and entry into the host cell. This is Capsid protein from Torque teno felis virus (isolate Fc-TTV4).